A 68-amino-acid chain; its full sequence is Copper transport protein ATOX1 (68 aa).

An HMA domain is found at 1 to 63; that stretch reads MPKHEFSVDM…TLGKTGKAVS (63 aa). Residues C12 and C15 each coordinate Cu cation. Position 47 is a phosphoserine (S47). Position 60 is an N6-acetyllysine (K60).

This sequence belongs to the ATX1 family. As to quaternary structure, homodimer. Interacts with ATP7B. Interacts with ATP7A. Interacts (via dimer form) with SLC31A1 (via C-terminal domain); this interaction improves ATOX1 stability and controls intracellular Cu(I) levels.

Binds and deliver cytosolic copper to the copper ATPase proteins. May be important in cellular antioxidant defense. The sequence is that of Copper transport protein ATOX1 from Bos taurus (Bovine).